We begin with the raw amino-acid sequence, 217 residues long: GTP cyclohydrolase 1 (217 aa).

Positions 109, 112, and 180 each coordinate Zn(2+).

It belongs to the GTP cyclohydrolase I family. In terms of assembly, homomer.

The enzyme catalyses GTP + H2O = 7,8-dihydroneopterin 3'-triphosphate + formate + H(+). The protein operates within cofactor biosynthesis; 7,8-dihydroneopterin triphosphate biosynthesis; 7,8-dihydroneopterin triphosphate from GTP: step 1/1. The sequence is that of GTP cyclohydrolase 1 from Aliivibrio salmonicida (strain LFI1238) (Vibrio salmonicida (strain LFI1238)).